We begin with the raw amino-acid sequence, 38 residues long: Photosystem II reaction center protein L (38 aa).

Residues 17–37 (SLYWGLLLIFVLAVLFSSYFF) form a helical membrane-spanning segment.

This sequence belongs to the PsbL family. PSII is composed of 1 copy each of membrane proteins PsbA, PsbB, PsbC, PsbD, PsbE, PsbF, PsbH, PsbI, PsbJ, PsbK, PsbL, PsbM, PsbT, PsbX, PsbY, PsbZ, Psb30/Ycf12, at least 3 peripheral proteins of the oxygen-evolving complex and a large number of cofactors. It forms dimeric complexes.

It is found in the plastid. The protein resides in the chloroplast thylakoid membrane. Its function is as follows. One of the components of the core complex of photosystem II (PSII). PSII is a light-driven water:plastoquinone oxidoreductase that uses light energy to abstract electrons from H(2)O, generating O(2) and a proton gradient subsequently used for ATP formation. It consists of a core antenna complex that captures photons, and an electron transfer chain that converts photonic excitation into a charge separation. This subunit is found at the monomer-monomer interface and is required for correct PSII assembly and/or dimerization. This is Photosystem II reaction center protein L from Thalassiosira pseudonana (Marine diatom).